The sequence spans 302 residues: Nucleotide-binding protein SERP0433 (302 aa).

Residue 18–25 (GMSGAGKS) participates in ATP binding. GTP is bound at residue 69–72 (DLRG).

It belongs to the RapZ-like family.

In terms of biological role, displays ATPase and GTPase activities. This chain is Nucleotide-binding protein SERP0433, found in Staphylococcus epidermidis (strain ATCC 35984 / DSM 28319 / BCRC 17069 / CCUG 31568 / BM 3577 / RP62A).